The sequence spans 256 residues: Imidazole glycerol phosphate synthase subunit HisF (256 aa).

Residues Asp12 and Asp131 contribute to the active site.

This sequence belongs to the HisA/HisF family. As to quaternary structure, heterodimer of HisH and HisF.

It is found in the cytoplasm. The catalysed reaction is 5-[(5-phospho-1-deoxy-D-ribulos-1-ylimino)methylamino]-1-(5-phospho-beta-D-ribosyl)imidazole-4-carboxamide + L-glutamine = D-erythro-1-(imidazol-4-yl)glycerol 3-phosphate + 5-amino-1-(5-phospho-beta-D-ribosyl)imidazole-4-carboxamide + L-glutamate + H(+). The protein operates within amino-acid biosynthesis; L-histidine biosynthesis; L-histidine from 5-phospho-alpha-D-ribose 1-diphosphate: step 5/9. Its function is as follows. IGPS catalyzes the conversion of PRFAR and glutamine to IGP, AICAR and glutamate. The HisF subunit catalyzes the cyclization activity that produces IGP and AICAR from PRFAR using the ammonia provided by the HisH subunit. In Bifidobacterium longum (strain DJO10A), this protein is Imidazole glycerol phosphate synthase subunit HisF.